A 967-amino-acid polypeptide reads, in one-letter code: MEGSGDKRHENLDEDGYNWHAQSVESVSKALGTNPNLGVSDGRSAELLKQHGYNELKGQAGVNPWKILLRQVSNGLTAVLVVAMVVSFAVKDYAEAGVLVIVIAFNTIVGFVQEYRAEKTMDALRKMASPSAKVIRDGSHHRISSRDVVPGDLLTFEVGDVVPADCRLIEVLNLEVDEALLTGEAVPSLKTVQPIGGKDVSIGDRTNMSYSSTTVVKGRGKAIVVSTGMSTEIGKISKAINETKTQSTPMQRKLNLMAYMLLAFALLLALIVFAVNKFNFSTEVVIYAIALSIAIIPEGLIAVITIVQALGVRRMAKQHALVRKLVALESLQAVTNICSDKTGTLTEGKMVVTNVWLPGHESEYIVAGQGYETVGDLSTSAGVAVVRSAALEDVNYRLLVECCALCNTANIVEASEGKVWGDPTEIALQVFAYKMEMGMPILRKHKELVEEFPFSSDTKRMSMVCQTESGNFLEIFTKGSEVVLSICDNVMDRTGDIHSISGDEGFLKLVSTQQEEMAKQGLRVLVLAYGQVSERSIGKPLSKWERNDAEKSLTFLGLVGIRDTPRVESEQSVRNCHRAGITVHMLTGDHKATAMSIAKEVGIIEEPHGSEIANGNEIVPLSASVMTATEFDQLTDEQVDALVDLPLVIARCTPSTKVRMIDALHRRKKFVAMTGDGVNDAPSLKKADVGIAMGAGSDVAKTSSDIVLTDNNFATIVQAIGEGRRIFSNIKKFVLHLLSTNVGQVIVLLIGLAFKDRTGTSVFPLSPVQILFLNLVTGTPPAMALGIEPASSSVMQVPPHVKGLFTVELIMDIFIFGTFIGILALASWVLVIYPFGNSDLATLCNTTANLQECSTIFRARSTVQLSFTWMILFHAYNCRHLRASLLTAEGGGASRFFSNKVLVASVFIGALLPIPTIYIGTLNTEVFKQEGITWEWIIVIVSVFVFFLLSEFYKLLKRRFIKTPYNM.

Topologically, residues 1–70 (MEGSGDKRHE…GVNPWKILLR (70 aa)) are cytoplasmic. The helical transmembrane segment at 71 to 91 (QVSNGLTAVLVVAMVVSFAVK) threads the bilayer. A topological domain (extracellular) is located at residue Asp92. A helical membrane pass occupies residues 93 to 113 (YAEAGVLVIVIAFNTIVGFVQ). Over 114–254 (EYRAEKTMDA…TQSTPMQRKL (141 aa)) the chain is Cytoplasmic. Residues 255 to 275 (NLMAYMLLAFALLLALIVFAV) form a helical membrane-spanning segment. Over 276 to 283 (NKFNFSTE) the chain is Extracellular. N-linked (GlcNAc...) asparagine glycosylation occurs at Asn279. The helical transmembrane segment at 284 to 304 (VVIYAIALSIAIIPEGLIAVI) threads the bilayer. Residues 305-732 (TIVQALGVRR…GRRIFSNIKK (428 aa)) are Cytoplasmic-facing. Catalysis depends on Asp340, which acts as the 4-aspartylphosphate intermediate. Residues Asp340 and Thr342 each contribute to the Mg(2+) site. Thr342, Glu425, Lys478, Arg523, Thr587, Gly588, Asp589, Arg651, and Lys657 together coordinate ATP. Asp676 serves as a coordination point for Mg(2+). Residue Asn679 participates in ATP binding. Residues 733-753 (FVLHLLSTNVGQVIVLLIGLA) form a helical membrane-spanning segment. The Extracellular portion of the chain corresponds to 754–812 (FKDRTGTSVFPLSPVQILFLNLVTGTPPAMALGIEPASSSVMQVPPHVKGLFTVELIMD). Residues 813 to 833 (IFIFGTFIGILALASWVLVIY) form a helical membrane-spanning segment. Over 834–900 (PFGNSDLATL…GGASRFFSNK (67 aa)) the chain is Cytoplasmic. A helical membrane pass occupies residues 901–921 (VLVASVFIGALLPIPTIYIGT). Over 922-931 (LNTEVFKQEG) the chain is Extracellular. A helical membrane pass occupies residues 932–952 (ITWEWIIVIVSVFVFFLLSEF). Residues 953 to 967 (YKLLKRRFIKTPYNM) are Cytoplasmic-facing.

This sequence belongs to the cation transport ATPase (P-type) (TC 3.A.3) family. Type IID subfamily. It depends on Mg(2+) as a cofactor. The active site is phosphorylated in presence of sodium or potassium and in conditions of higher pH. Not phosphorylated in presence of calcium ions.

It is found in the cell membrane. The enzyme catalyses Na(+)(in) + ATP + H2O = Na(+)(out) + ADP + phosphate + H(+). It carries out the reaction K(+)(in) + ATP + H2O = K(+)(out) + ADP + phosphate + H(+). In terms of biological role, catalyzes the hydrolysis of ATP coupled with the export of sodium and potassium from the cell. May pump potassium inefficiently. May transport other cations such as lithium. Sodium/potassium efflux ATPases are involved in salt tolerance and maintaining the membrane potential across the plasma membrane in high salinity (Na+) or alkaline (K+) environments. In Physcomitrium patens (Spreading-leaved earth moss), this protein is Sodium/potassium exporting P-type ATPase 1.